The sequence spans 89 residues: MSLTQARKQEIFEAYQIHPTDTGSADVQVAVLSERISRLSQHLQQNKKDFASRTGLLRLIGQRKRLLAYILKQDRDRYKALIERLGIRG.

The protein belongs to the universal ribosomal protein uS15 family. As to quaternary structure, part of the 30S ribosomal subunit. Forms a bridge to the 50S subunit in the 70S ribosome, contacting the 23S rRNA.

In terms of biological role, one of the primary rRNA binding proteins, it binds directly to 16S rRNA where it helps nucleate assembly of the platform of the 30S subunit by binding and bridging several RNA helices of the 16S rRNA. Forms an intersubunit bridge (bridge B4) with the 23S rRNA of the 50S subunit in the ribosome. This Synechococcus elongatus (strain ATCC 33912 / PCC 7942 / FACHB-805) (Anacystis nidulans R2) protein is Small ribosomal subunit protein uS15.